A 134-amino-acid polypeptide reads, in one-letter code: Profilin-4 (134 aa).

Cysteines 13 and 118 form a disulfide. Residues 84 to 100 carry the Involved in PIP2 interaction motif; the sequence is AVIRGKKGSGGITIKKT. T114 carries the post-translational modification Phosphothreonine.

This sequence belongs to the profilin family. In terms of assembly, occurs in many kinds of cells as a complex with monomeric actin in a 1:1 ratio. Phosphorylated by MAP kinases.

It localises to the cytoplasm. Its subcellular location is the cytoskeleton. Its function is as follows. Binds to actin and affects the structure of the cytoskeleton. At high concentrations, profilin prevents the polymerization of actin, whereas it enhances it at low concentrations. The polypeptide is Profilin-4 (Olea europaea (Common olive)).